A 334-amino-acid chain; its full sequence is Tryptophan--tRNA ligase (334 aa).

Residues 11–13 and 19–20 contribute to the ATP site; these read QPS and GN. The 'HIGH' region motif lies at 12–20; the sequence is PSGELTIGN. L-tryptophan is bound at residue D135. Residues 147–149, V186, and 195–199 each bind ATP; these read GED and KMSKS. The 'KMSKS' region motif lies at 195 to 199; the sequence is KMSKS.

This sequence belongs to the class-I aminoacyl-tRNA synthetase family. Homodimer.

It localises to the cytoplasm. It carries out the reaction tRNA(Trp) + L-tryptophan + ATP = L-tryptophyl-tRNA(Trp) + AMP + diphosphate + H(+). Its function is as follows. Catalyzes the attachment of tryptophan to tRNA(Trp). This Shigella flexneri protein is Tryptophan--tRNA ligase.